The chain runs to 220 residues: Superoxide dismutase [Cu-Zn], chloroplastic (220 aa).

A chloroplast-targeting transit peptide spans 1–66 (MAAHCILFSS…AAPKPLTVFA (66 aa)). Residues His-112, His-114, and His-129 each coordinate Cu cation. The cysteines at positions 123 and 212 are disulfide-linked. Zn(2+) is bound by residues His-129, His-137, His-146, and Asp-149. His-186 provides a ligand contact to Cu cation.

Belongs to the Cu-Zn superoxide dismutase family. As to quaternary structure, homotetramer. Requires Cu cation as cofactor. Zn(2+) serves as cofactor.

The protein resides in the plastid. It localises to the chloroplast. The catalysed reaction is 2 superoxide + 2 H(+) = H2O2 + O2. In terms of biological role, destroys radicals which are normally produced within the cells and which are toxic to biological systems. The chain is Superoxide dismutase [Cu-Zn], chloroplastic (SODCP) from Solidago canadensis var. scabra (Tall goldenrod).